A 250-amino-acid polypeptide reads, in one-letter code: ATP synthase subunit a (250 aa).

Transmembrane regions (helical) follow at residues 29–49 (ASLF…FATS), 84–104 (FFPL…LGMF), 114–134 (IIVT…YGFY), 143–163 (VFVP…IEII), 193–213 (FVAS…LPLI), and 216–236 (VALT…FAVL).

It belongs to the ATPase A chain family. As to quaternary structure, F-type ATPases have 2 components, CF(1) - the catalytic core - and CF(0) - the membrane proton channel. CF(1) has five subunits: alpha(3), beta(3), gamma(1), delta(1), epsilon(1). CF(0) has three main subunits: a(1), b(2) and c(9-12). The alpha and beta chains form an alternating ring which encloses part of the gamma chain. CF(1) is attached to CF(0) by a central stalk formed by the gamma and epsilon chains, while a peripheral stalk is formed by the delta and b chains.

It is found in the cell inner membrane. Key component of the proton channel; it plays a direct role in the translocation of protons across the membrane. This Rhizobium etli (strain CIAT 652) protein is ATP synthase subunit a.